Consider the following 418-residue polypeptide: Gamma-glutamyl phosphate reductase (418 aa).

It belongs to the gamma-glutamyl phosphate reductase family.

The protein resides in the cytoplasm. It carries out the reaction L-glutamate 5-semialdehyde + phosphate + NADP(+) = L-glutamyl 5-phosphate + NADPH + H(+). Its pathway is amino-acid biosynthesis; L-proline biosynthesis; L-glutamate 5-semialdehyde from L-glutamate: step 2/2. Functionally, catalyzes the NADPH-dependent reduction of L-glutamate 5-phosphate into L-glutamate 5-semialdehyde and phosphate. The product spontaneously undergoes cyclization to form 1-pyrroline-5-carboxylate. The protein is Gamma-glutamyl phosphate reductase of Geotalea uraniireducens (strain Rf4) (Geobacter uraniireducens).